The sequence spans 246 residues: Small ribosomal subunit protein uS2 (246 aa).

It belongs to the universal ribosomal protein uS2 family.

The protein is Small ribosomal subunit protein uS2 of Dictyoglomus turgidum (strain DSM 6724 / Z-1310).